The primary structure comprises 669 residues: DNA ligase (669 aa).

Residues 34–38, 83–84, and Glu114 each bind NAD(+); these read DAEYD and SL. The N6-AMP-lysine intermediate role is filled by Lys116. NAD(+) is bound by residues Arg137, Glu171, Lys287, and Lys311. Zn(2+)-binding residues include Cys405, Cys408, Cys423, and Cys428. Residues 591–669 form the BRCT domain; sequence NIASYFAGKT…EERFLQELNK (79 aa).

The protein belongs to the NAD-dependent DNA ligase family. LigA subfamily. Mg(2+) is required as a cofactor. The cofactor is Mn(2+).

The catalysed reaction is NAD(+) + (deoxyribonucleotide)n-3'-hydroxyl + 5'-phospho-(deoxyribonucleotide)m = (deoxyribonucleotide)n+m + AMP + beta-nicotinamide D-nucleotide.. DNA ligase that catalyzes the formation of phosphodiester linkages between 5'-phosphoryl and 3'-hydroxyl groups in double-stranded DNA using NAD as a coenzyme and as the energy source for the reaction. It is essential for DNA replication and repair of damaged DNA. In Bacillus cytotoxicus (strain DSM 22905 / CIP 110041 / 391-98 / NVH 391-98), this protein is DNA ligase.